A 440-amino-acid polypeptide reads, in one-letter code: MERVERENGCFHTFCPIASVAWLHRKIKDSFFLIVGTHTCAHFIQTALDVMVYAHSRFGFAVLEESDLVSASPTEELGKVVQQVVDEWHPKVIFVLSTCSVDILKMDLEVSCKDLSTRFGFPVLPASTSGIDRSFTQGEDAVLHALLPFVPKEAPAVEPVEEKKPRWFSFGKESEKEKAEPARNLVLIGAVTDSTIQQLQWELKQLGLPKVDVFPDGDIRKMPVINEQTVVVPLQPYLNDTLATIRRERRAKVLSTVFPIGPDGTARFLEAICLEFGLDTSRIKEKEAQAWRDLEPQLQILRGKKIMFLGDNLLELPLARFLTSCDVQVVEAGTPYIHSKDLQQELELLKERDVRIVESPDFTKQLQRMQEYKPDLVVAGLGICNPLEAMGFTTAWSIEFTFAQIHGFVNAIDLIKLFTKPLLKRQALMEHGWAEAGWLE.

[4Fe-4S] cluster contacts are provided by Cys-15, Cys-40, and Cys-99.

This sequence belongs to the BchN/ChlN family. Protochlorophyllide reductase is composed of three subunits; BchL, BchN and BchB. Forms a heterotetramer of two BchB and two BchN subunits. [4Fe-4S] cluster is required as a cofactor.

It catalyses the reaction chlorophyllide a + oxidized 2[4Fe-4S]-[ferredoxin] + 2 ADP + 2 phosphate = protochlorophyllide a + reduced 2[4Fe-4S]-[ferredoxin] + 2 ATP + 2 H2O. It participates in porphyrin-containing compound metabolism; bacteriochlorophyll biosynthesis (light-independent). Component of the dark-operative protochlorophyllide reductase (DPOR) that uses Mg-ATP and reduced ferredoxin to reduce ring D of protochlorophyllide (Pchlide) to form chlorophyllide a (Chlide). This reaction is light-independent. The NB-protein (BchN-BchB) is the catalytic component of the complex. The chain is Light-independent protochlorophyllide reductase subunit N from Heliobacterium mobile (Heliobacillus mobilis).